The primary structure comprises 240 residues: tRNA (guanine-N(7)-)-methyltransferase (240 aa).

Residues 1–20 (MTESHDTPITPDGEARPHRR) form a disordered region. Residues glutamate 70, glutamate 95, aspartate 122, and aspartate 145 each contribute to the S-adenosyl-L-methionine site. Aspartate 145 is a catalytic residue. Residues lysine 149, aspartate 181, and 218-221 (TKFE) each bind substrate.

Belongs to the class I-like SAM-binding methyltransferase superfamily. TrmB family.

It catalyses the reaction guanosine(46) in tRNA + S-adenosyl-L-methionine = N(7)-methylguanosine(46) in tRNA + S-adenosyl-L-homocysteine. The protein operates within tRNA modification; N(7)-methylguanine-tRNA biosynthesis. Catalyzes the formation of N(7)-methylguanine at position 46 (m7G46) in tRNA. In Pseudomonas putida (strain ATCC 47054 / DSM 6125 / CFBP 8728 / NCIMB 11950 / KT2440), this protein is tRNA (guanine-N(7)-)-methyltransferase.